We begin with the raw amino-acid sequence, 225 residues long: Probable GTP-binding protein EngB (225 aa).

Residues 31–204 (VGVEIAFAGR…LGILDSWCKP (174 aa)) enclose the EngB-type G domain. GTP-binding positions include 39 to 46 (GRSNAGKS), 65 to 69 (GRTQL), 83 to 86 (DLPG), 150 to 153 (TKAD), and 183 to 185 (FSS). 2 residues coordinate Mg(2+): S46 and T67.

The protein belongs to the TRAFAC class TrmE-Era-EngA-EngB-Septin-like GTPase superfamily. EngB GTPase family. It depends on Mg(2+) as a cofactor.

Functionally, necessary for normal cell division and for the maintenance of normal septation. The polypeptide is Probable GTP-binding protein EngB (Shewanella pealeana (strain ATCC 700345 / ANG-SQ1)).